The primary structure comprises 191 residues: NAD(P)H-quinone oxidoreductase subunit 6, chloroplastic (191 aa).

The next 5 membrane-spanning stretches (helical) occupy residues 10–30, 32–52, 61–81, 89–109, and 153–173; these read TIFLFLESGLILGSLGVILLT, IVYSALFLGFVFVCISLLYLL, AQILIYVGAVNVLIIFAVMLI, FFVYWTIGDGITLTLCTSIFL, and FLLPFELMSIILLVALIGAIT.

The protein belongs to the complex I subunit 6 family. As to quaternary structure, NDH is composed of at least 16 different subunits, 5 of which are encoded in the nucleus.

The protein resides in the plastid. The protein localises to the chloroplast thylakoid membrane. It carries out the reaction a plastoquinone + NADH + (n+1) H(+)(in) = a plastoquinol + NAD(+) + n H(+)(out). It catalyses the reaction a plastoquinone + NADPH + (n+1) H(+)(in) = a plastoquinol + NADP(+) + n H(+)(out). Functionally, NDH shuttles electrons from NAD(P)H:plastoquinone, via FMN and iron-sulfur (Fe-S) centers, to quinones in the photosynthetic chain and possibly in a chloroplast respiratory chain. The immediate electron acceptor for the enzyme in this species is believed to be plastoquinone. Couples the redox reaction to proton translocation, and thus conserves the redox energy in a proton gradient. This Marchantia polymorpha (Common liverwort) protein is NAD(P)H-quinone oxidoreductase subunit 6, chloroplastic (ndhG).